A 666-amino-acid chain; its full sequence is UvrABC system protein B (666 aa).

Positions D26–R183 constitute a Helicase ATP-binding domain. Residue G39–T46 participates in ATP binding. Positions Y92–I115 match the Beta-hairpin motif. The 163-residue stretch at Q429–V591 folds into the Helicase C-terminal domain. The region spanning E625–N660 is the UVR domain.

Belongs to the UvrB family. Forms a heterotetramer with UvrA during the search for lesions. Interacts with UvrC in an incision complex.

The protein localises to the cytoplasm. Functionally, the UvrABC repair system catalyzes the recognition and processing of DNA lesions. A damage recognition complex composed of 2 UvrA and 2 UvrB subunits scans DNA for abnormalities. Upon binding of the UvrA(2)B(2) complex to a putative damaged site, the DNA wraps around one UvrB monomer. DNA wrap is dependent on ATP binding by UvrB and probably causes local melting of the DNA helix, facilitating insertion of UvrB beta-hairpin between the DNA strands. Then UvrB probes one DNA strand for the presence of a lesion. If a lesion is found the UvrA subunits dissociate and the UvrB-DNA preincision complex is formed. This complex is subsequently bound by UvrC and the second UvrB is released. If no lesion is found, the DNA wraps around the other UvrB subunit that will check the other stand for damage. In Leptospira borgpetersenii serovar Hardjo-bovis (strain JB197), this protein is UvrABC system protein B.